Consider the following 667-residue polypeptide: Protein adenylyltransferase SelO, mitochondrial (667 aa).

Residues 1 to 6 constitute a mitochondrion transit peptide; that stretch reads MASVRA. 7 residues coordinate ATP: Gly154, Gly156, Lys177, Asp189, Gly190, Arg247, and Arg254. Residue Asp341 is the Proton acceptor of the active site. Asn342 and Asp351 together coordinate Mg(2+). ATP is bound at residue Asp351. Residues 628 to 652 form a disordered region; it reads YHSEEEATGPEAVARSTEEQSSYSN. Thr635 bears the Phosphothreonine mark. The residue at position 651 (Ser651) is a Phosphoserine. Sec665 is a non-standard amino acid (selenocysteine).

The protein belongs to the SELO family. Requires Mg(2+) as cofactor.

The protein localises to the mitochondrion. It catalyses the reaction L-tyrosyl-[protein] + ATP = O-(5'-adenylyl)-L-tyrosyl-[protein] + diphosphate. It carries out the reaction L-threonyl-[protein] + ATP = 3-O-(5'-adenylyl)-L-threonyl-[protein] + diphosphate. The catalysed reaction is L-seryl-[protein] + ATP = 3-O-(5'-adenylyl)-L-seryl-[protein] + diphosphate. Functionally, catalyzes the transfer of adenosine 5'-monophosphate (AMP) to Ser, Thr and Tyr residues of target proteins (AMPylation). May be a redox-active mitochondrial selenoprotein which interacts with a redox target protein. This Mus musculus (Mouse) protein is Protein adenylyltransferase SelO, mitochondrial.